Reading from the N-terminus, the 348-residue chain is Uroporphyrinogen decarboxylase (348 aa).

Residues 27–31, Phe46, Asp76, Tyr152, Ser207, and His320 each bind substrate; that span reads RQAGR.

Belongs to the uroporphyrinogen decarboxylase family. Homodimer.

It is found in the cytoplasm. It catalyses the reaction uroporphyrinogen III + 4 H(+) = coproporphyrinogen III + 4 CO2. It participates in porphyrin-containing compound metabolism; protoporphyrin-IX biosynthesis; coproporphyrinogen-III from 5-aminolevulinate: step 4/4. Catalyzes the decarboxylation of four acetate groups of uroporphyrinogen-III to yield coproporphyrinogen-III. This chain is Uroporphyrinogen decarboxylase, found in Bacillus cereus (strain G9842).